A 492-amino-acid polypeptide reads, in one-letter code: Bifunctional protein GlmU (492 aa).

The segment at M1–R241 is pyrophosphorylase. Residues L12–G15, K26, Q83, and G88–T89 contribute to the UDP-N-acetyl-alpha-D-glucosamine site. A Mg(2+)-binding site is contributed by D114. Residues G151, E166, N181, and N239 each coordinate UDP-N-acetyl-alpha-D-glucosamine. Mg(2+) is bound at residue N239. Residues V242–A262 are linker. Residues G263 to P492 form an N-acetyltransferase region. UDP-N-acetyl-alpha-D-glucosamine-binding residues include R344 and K362. The active-site Proton acceptor is H374. The UDP-N-acetyl-alpha-D-glucosamine site is built by Y377 and N388. Residues A391, N397–Y398, and A434 contribute to the acetyl-CoA site. A disordered region spans residues P443–P492.

This sequence in the N-terminal section; belongs to the N-acetylglucosamine-1-phosphate uridyltransferase family. In the C-terminal section; belongs to the transferase hexapeptide repeat family. In terms of assembly, homotrimer. It depends on Mg(2+) as a cofactor.

It is found in the cytoplasm. It carries out the reaction alpha-D-glucosamine 1-phosphate + acetyl-CoA = N-acetyl-alpha-D-glucosamine 1-phosphate + CoA + H(+). The catalysed reaction is N-acetyl-alpha-D-glucosamine 1-phosphate + UTP + H(+) = UDP-N-acetyl-alpha-D-glucosamine + diphosphate. The protein operates within nucleotide-sugar biosynthesis; UDP-N-acetyl-alpha-D-glucosamine biosynthesis; N-acetyl-alpha-D-glucosamine 1-phosphate from alpha-D-glucosamine 6-phosphate (route II): step 2/2. Its pathway is nucleotide-sugar biosynthesis; UDP-N-acetyl-alpha-D-glucosamine biosynthesis; UDP-N-acetyl-alpha-D-glucosamine from N-acetyl-alpha-D-glucosamine 1-phosphate: step 1/1. It participates in bacterial outer membrane biogenesis; LPS lipid A biosynthesis. Catalyzes the last two sequential reactions in the de novo biosynthetic pathway for UDP-N-acetylglucosamine (UDP-GlcNAc). The C-terminal domain catalyzes the transfer of acetyl group from acetyl coenzyme A to glucosamine-1-phosphate (GlcN-1-P) to produce N-acetylglucosamine-1-phosphate (GlcNAc-1-P), which is converted into UDP-GlcNAc by the transfer of uridine 5-monophosphate (from uridine 5-triphosphate), a reaction catalyzed by the N-terminal domain. The sequence is that of Bifunctional protein GlmU from Mycobacterium ulcerans (strain Agy99).